We begin with the raw amino-acid sequence, 232 residues long: Large ribosomal subunit protein uL1 (232 aa).

This sequence belongs to the universal ribosomal protein uL1 family. As to quaternary structure, part of the 50S ribosomal subunit.

In terms of biological role, binds directly to 23S rRNA. The L1 stalk is quite mobile in the ribosome, and is involved in E site tRNA release. Protein L1 is also a translational repressor protein, it controls the translation of the L11 operon by binding to its mRNA. This is Large ribosomal subunit protein uL1 from Mesorhizobium japonicum (strain LMG 29417 / CECT 9101 / MAFF 303099) (Mesorhizobium loti (strain MAFF 303099)).